The sequence spans 378 residues: Succinyl-diaminopimelate desuccinylase (378 aa).

A Zn(2+)-binding site is contributed by histidine 68. Aspartate 70 is a catalytic residue. Residue aspartate 101 coordinates Zn(2+). Glutamate 135 serves as the catalytic Proton acceptor. Zn(2+)-binding residues include glutamate 136, glutamate 164, and histidine 350.

The protein belongs to the peptidase M20A family. DapE subfamily. In terms of assembly, homodimer. The cofactor is Zn(2+). Co(2+) serves as cofactor.

The catalysed reaction is N-succinyl-(2S,6S)-2,6-diaminopimelate + H2O = (2S,6S)-2,6-diaminopimelate + succinate. It participates in amino-acid biosynthesis; L-lysine biosynthesis via DAP pathway; LL-2,6-diaminopimelate from (S)-tetrahydrodipicolinate (succinylase route): step 3/3. In terms of biological role, catalyzes the hydrolysis of N-succinyl-L,L-diaminopimelic acid (SDAP), forming succinate and LL-2,6-diaminopimelate (DAP), an intermediate involved in the bacterial biosynthesis of lysine and meso-diaminopimelic acid, an essential component of bacterial cell walls. The sequence is that of Succinyl-diaminopimelate desuccinylase from Acinetobacter baumannii (strain ATCC 17978 / DSM 105126 / CIP 53.77 / LMG 1025 / NCDC KC755 / 5377).